A 199-amino-acid chain; its full sequence is MRILGLTGSIGMGKSTTARLFAEAGVPVYDADATVHQIYEGEAAPAVETAFPGTTVNGKVDRALLSARVLHDAAAMQRLEAIVHPMLRAHHQQFLADAEKSGAPVAVVDVPLLYETGGDARVDAVVVVTTSHQVQRARILARQGMTDEKLDALLARQLPDAEKRQRADFVVDTSNGLEPVRAQIREILAATAKMPQRRA.

One can recognise a DPCK domain in the interval 3–199; it reads ILGLTGSIGM…ATAKMPQRRA (197 aa). Residue 11 to 16 coordinates ATP; that stretch reads GMGKST.

This sequence belongs to the CoaE family.

It is found in the cytoplasm. The catalysed reaction is 3'-dephospho-CoA + ATP = ADP + CoA + H(+). The protein operates within cofactor biosynthesis; coenzyme A biosynthesis; CoA from (R)-pantothenate: step 5/5. Its function is as follows. Catalyzes the phosphorylation of the 3'-hydroxyl group of dephosphocoenzyme A to form coenzyme A. This chain is Dephospho-CoA kinase, found in Rhodopseudomonas palustris (strain BisB18).